The chain runs to 576 residues: MKESPLITLVKRHSETHFANIKYGYYVLIISLVYLIGLALLRAFGRRTPSRSSSAFKNKIIYRLYDIDPAIHLGILFFAVLVPFYYHYSLTTQSTVYLKRLGRLSYALIPLNLFLTLRPNWFLRKNCTYTDFIPFHKWFSRIITVIGLLHGIFFIIKWAIDDNVSLKQKLILKTFNFVGFIISILVLFLLICSIGPMRRYNYRLFYIVHNLVNVAFILLTPIHSRPGVKFPFLLLNCTLLFIHIINRIVFAKSLMILNKNANYSKTNLVHVRLPRAILPDYFEPGSHIRISPYRRINPLYWLLPSHPYTIASLAEDNSIDLIIKETSTAEPGSQIESLRSNPKSFHLDQEKNYTLINSYPPSVPEECYSQGTNIAIICGGSGISFALPLFRHFFNKENVKYLKMIWLIKNYSEYELVLDYLKTNGLTFEKKLSNNKRISVFISGEYTAETRLDEITTNIDDENSEYEMGSFNNEDEDLSISNFNSENADSNDNTPETSHSPTKENGSLIEVKSKHSFTLSNELKSFNNESAQVNQNETWLFSCGPPSLLQLSKKYCNDERINFSVRLTDYEGKRKE.

The next 7 helical transmembrane spans lie at 21–41 (IKYG…LALL), 70–90 (AIHL…HYSL), 101–118 (LGRL…LTLR), 142–162 (IITV…AIDD), 177–197 (FVGF…IGPM), 204–224 (LFYI…PIHS), and 230–250 (FPFL…RIVF). In terms of domain architecture, Ferric oxidoreductase spans 101 to 219 (LGRLSYALIP…NLVNVAFILL (119 aa)). The FAD-binding FR-type domain maps to 250-388 (FAKSLMILNK…GGSGISFALP (139 aa)). Positions 480-505 (ISNFNSENADSNDNTPETSHSPTKEN) are enriched in polar residues. A disordered region spans residues 480-507 (ISNFNSENADSNDNTPETSHSPTKENGS).

It belongs to the ferric reductase (FRE) family. AIM14 subfamily. In terms of assembly, interacts with ribosomes.

The protein localises to the membrane. Probable cell surface metalloreductase. May be involved in iron or copper homeostasis. In Saccharomyces cerevisiae (strain Lalvin EC1118 / Prise de mousse) (Baker's yeast), this protein is Probable metalloreductase AIM14 (AIM14).